The chain runs to 477 residues: Cobyric acid synthase (477 aa).

The region spanning 248 to 432 (GLHIACPMLS…LHGLFSGDGF (185 aa)) is the GATase cobBQ-type domain. Cys-330 functions as the Nucleophile in the catalytic mechanism. His-424 is a catalytic residue.

It belongs to the CobB/CobQ family. CobQ subfamily.

Its pathway is cofactor biosynthesis; adenosylcobalamin biosynthesis. Catalyzes amidations at positions B, D, E, and G on adenosylcobyrinic A,C-diamide. NH(2) groups are provided by glutamine, and one molecule of ATP is hydrogenolyzed for each amidation. This chain is Cobyric acid synthase, found in Paracoccus denitrificans (strain Pd 1222).